A 244-amino-acid polypeptide reads, in one-letter code: 5-oxoprolinase subunit A (244 aa).

Belongs to the LamB/PxpA family. As to quaternary structure, forms a complex composed of PxpA, PxpB and PxpC.

The catalysed reaction is 5-oxo-L-proline + ATP + 2 H2O = L-glutamate + ADP + phosphate + H(+). Functionally, catalyzes the cleavage of 5-oxoproline to form L-glutamate coupled to the hydrolysis of ATP to ADP and inorganic phosphate. This chain is 5-oxoprolinase subunit A, found in Escherichia coli (strain K12).